Consider the following 134-residue polypeptide: Transcription antitermination protein NusB (134 aa).

The protein belongs to the NusB family.

Involved in transcription antitermination. Required for transcription of ribosomal RNA (rRNA) genes. Binds specifically to the boxA antiterminator sequence of the ribosomal RNA (rrn) operons. The sequence is that of Transcription antitermination protein NusB from Shewanella frigidimarina (strain NCIMB 400).